Reading from the N-terminus, the 215-residue chain is Orotate phosphoribosyltransferase (215 aa).

Residue K26 participates in 5-phospho-alpha-D-ribose 1-diphosphate binding. Orotate is bound at residue 34-35 (FF). Residues 72–73 (YK), R99, K100, K103, H105, and 124–132 (DDVITAGTA) each bind 5-phospho-alpha-D-ribose 1-diphosphate. Orotate is bound by residues T128 and R156.

This sequence belongs to the purine/pyrimidine phosphoribosyltransferase family. PyrE subfamily. Homodimer. It depends on Mg(2+) as a cofactor.

It carries out the reaction orotidine 5'-phosphate + diphosphate = orotate + 5-phospho-alpha-D-ribose 1-diphosphate. The protein operates within pyrimidine metabolism; UMP biosynthesis via de novo pathway; UMP from orotate: step 1/2. Its function is as follows. Catalyzes the transfer of a ribosyl phosphate group from 5-phosphoribose 1-diphosphate to orotate, leading to the formation of orotidine monophosphate (OMP). This is Orotate phosphoribosyltransferase from Hahella chejuensis (strain KCTC 2396).